Consider the following 273-residue polypeptide: Formamidopyrimidine-DNA glycosylase (273 aa).

The active-site Schiff-base intermediate with DNA is the P2. The active-site Proton donor is E3. Residue K58 is the Proton donor; for beta-elimination activity of the active site. The DNA site is built by H91 and R110. Residues 238-272 (QVYGKTGQPCPRCASMIVKIKLGGRGTHLCPHCQK) form an FPG-type zinc finger. R262 functions as the Proton donor; for delta-elimination activity in the catalytic mechanism.

It belongs to the FPG family. As to quaternary structure, monomer. It depends on Zn(2+) as a cofactor.

The enzyme catalyses Hydrolysis of DNA containing ring-opened 7-methylguanine residues, releasing 2,6-diamino-4-hydroxy-5-(N-methyl)formamidopyrimidine.. The catalysed reaction is 2'-deoxyribonucleotide-(2'-deoxyribose 5'-phosphate)-2'-deoxyribonucleotide-DNA = a 3'-end 2'-deoxyribonucleotide-(2,3-dehydro-2,3-deoxyribose 5'-phosphate)-DNA + a 5'-end 5'-phospho-2'-deoxyribonucleoside-DNA + H(+). Involved in base excision repair of DNA damaged by oxidation or by mutagenic agents. Acts as a DNA glycosylase that recognizes and removes damaged bases. Has a preference for oxidized purines, such as 7,8-dihydro-8-oxoguanine (8-oxoG). Has AP (apurinic/apyrimidinic) lyase activity and introduces nicks in the DNA strand. Cleaves the DNA backbone by beta-delta elimination to generate a single-strand break at the site of the removed base with both 3'- and 5'-phosphates. This Streptococcus thermophilus (strain CNRZ 1066) protein is Formamidopyrimidine-DNA glycosylase.